The following is a 417-amino-acid chain: Gamma-glutamyl phosphate reductase (417 aa).

The protein belongs to the gamma-glutamyl phosphate reductase family.

It is found in the cytoplasm. The enzyme catalyses L-glutamate 5-semialdehyde + phosphate + NADP(+) = L-glutamyl 5-phosphate + NADPH + H(+). The protein operates within amino-acid biosynthesis; L-proline biosynthesis; L-glutamate 5-semialdehyde from L-glutamate: step 2/2. Its function is as follows. Catalyzes the NADPH-dependent reduction of L-glutamate 5-phosphate into L-glutamate 5-semialdehyde and phosphate. The product spontaneously undergoes cyclization to form 1-pyrroline-5-carboxylate. This Legionella pneumophila (strain Paris) protein is Gamma-glutamyl phosphate reductase.